Here is a 135-residue protein sequence, read N- to C-terminus: Protein NrdI (135 aa).

This sequence belongs to the NrdI family.

Functionally, probably involved in ribonucleotide reductase function. The sequence is that of Protein NrdI from Pectobacterium atrosepticum (strain SCRI 1043 / ATCC BAA-672) (Erwinia carotovora subsp. atroseptica).